Consider the following 254-residue polypeptide: MSKAPPLRLGVNIDHIATLRNARGGRHPDPLRAAFAAIEAGADGITAHLREDRRHIRDADMQRLKAEISKPLNFEMAATDDMIRIALGVKPHAVCLVPERREELTTEGGLDVVGQQASLGPAIARFNDAGIRTSLFIAADPAQIETAAKLKAPAIEIHTGAWCDAITDGDAAKANTEWQRIFAGAALARSAGLEVHAGHGLDYATAETISELPQIVELNIGFHMIGEALFVGLGETVRAMRAAMDRGRAKAIAA.

Asn-12 provides a ligand contact to 3-amino-2-oxopropyl phosphate. Asp-14–His-15 lines the 1-deoxy-D-xylulose 5-phosphate pocket. A 3-amino-2-oxopropyl phosphate-binding site is contributed by Arg-23. Catalysis depends on His-48, which acts as the Proton acceptor. The 1-deoxy-D-xylulose 5-phosphate site is built by Arg-50 and His-55. Glu-75 acts as the Proton acceptor in catalysis. Thr-105 contributes to the 1-deoxy-D-xylulose 5-phosphate binding site. His-199 serves as the catalytic Proton donor. 3-amino-2-oxopropyl phosphate-binding positions include Gly-200 and Gly-221 to Phe-222.

Belongs to the PNP synthase family. In terms of assembly, homooctamer; tetramer of dimers.

The protein localises to the cytoplasm. The catalysed reaction is 3-amino-2-oxopropyl phosphate + 1-deoxy-D-xylulose 5-phosphate = pyridoxine 5'-phosphate + phosphate + 2 H2O + H(+). Its pathway is cofactor biosynthesis; pyridoxine 5'-phosphate biosynthesis; pyridoxine 5'-phosphate from D-erythrose 4-phosphate: step 5/5. Its function is as follows. Catalyzes the complicated ring closure reaction between the two acyclic compounds 1-deoxy-D-xylulose-5-phosphate (DXP) and 3-amino-2-oxopropyl phosphate (1-amino-acetone-3-phosphate or AAP) to form pyridoxine 5'-phosphate (PNP) and inorganic phosphate. In Rhodopseudomonas palustris (strain TIE-1), this protein is Pyridoxine 5'-phosphate synthase.